Reading from the N-terminus, the 199-residue chain is Protein Thf1 (199 aa).

A coiled-coil region spans residues 167-198 (QYSRVEKDISMYKSNIEKMKQALEIIALNLKT).

Belongs to the THF1 family.

Functionally, may be involved in photosynthetic membrane biogenesis. This chain is Protein Thf1, found in Prochlorococcus marinus (strain NATL1A).